Reading from the N-terminus, the 737-residue chain is Serine/threonine-protein kinase dst1 (737 aa).

Residues 29–281 (YHIQERLGKG…AKELLNHEFI (253 aa)) form the Protein kinase domain. Residues 35–43 (LGKGSFGQV) and Lys-58 contribute to the ATP site. Asp-149 functions as the Proton acceptor in the catalytic mechanism. Disordered stretches follow at residues 305–356 (SMFE…SNNY), 372–475 (KDDA…TTDQ), 491–559 (KPIT…ISNN), and 575–631 (NNNI…ESLS). Composition is skewed to low complexity over residues 334 to 345 (NNNTVTNYSTVI), 401 to 410 (SSCSSSSSSS), 425 to 444 (PITN…NKIP), and 454 to 473 (ATTT…STTT). Positions 491–503 (KPITSSNSTSVTP) are enriched in polar residues. Residues 510-525 (SNNTTTTSNINTPIKP) show a composition bias toward low complexity. 2 stretches are compositionally biased toward polar residues: residues 529-554 (LKKS…TPLK) and 585-596 (SPTTGQKIIKTN). Over residues 597 to 615 (SGGVLKSSGGLSSKRSPSS) the composition is skewed to low complexity.

It belongs to the protein kinase superfamily. STE Ser/Thr protein kinase family. STE20 subfamily. The cofactor is Mg(2+).

It catalyses the reaction L-seryl-[protein] + ATP = O-phospho-L-seryl-[protein] + ADP + H(+). The enzyme catalyses L-threonyl-[protein] + ATP = O-phospho-L-threonyl-[protein] + ADP + H(+). In Dictyostelium discoideum (Social amoeba), this protein is Serine/threonine-protein kinase dst1.